Consider the following 500-residue polypeptide: Nuclear distribution protein PAC1 (500 aa).

WD repeat units follow at residues histidine 125–glutamine 164, alanine 169–alanine 219, glycine 225–serine 265, glycine 268–glycine 310, glutamine 338–aspartate 378, glutamate 397–leucine 436, and isoleucine 459–leucine 500.

The protein belongs to the WD repeat LIS1/nudF family. In terms of assembly, self-associates. Interacts with NDL1 and dynein.

It is found in the cytoplasm. It localises to the cytoskeleton. Its subcellular location is the spindle pole. Positively regulates the activity of the minus-end directed microtubule motor protein dynein. Plays a central role in positioning the mitotic spindle at the bud neck during cell division. Targets cytoplasmic dynein to microtubule plus ends, thereby promoting dynein-mediated microtubule sliding along the bud cortex and consequently the movement of the mitotic spindle to the bud neck. The chain is Nuclear distribution protein PAC1 from Komagataella phaffii (strain GS115 / ATCC 20864) (Yeast).